Consider the following 130-residue polypeptide: Small ribosomal subunit protein uS8 (130 aa).

It belongs to the universal ribosomal protein uS8 family. In terms of assembly, part of the 30S ribosomal subunit.

Its function is as follows. One of the primary rRNA binding proteins, it binds directly to 16S rRNA central domain where it helps coordinate assembly of the platform of the 30S subunit. The sequence is that of Small ribosomal subunit protein uS8 from Methanococcus maripaludis (strain C5 / ATCC BAA-1333).